The chain runs to 2153 residues: MGAQVSRQNNGTHENGVTASNGSVIKYFNINYYKDSASSGLSRQDFSQDPSKFTQPLVDTLTNPALMSPSVEACGYSDRLKQITIGNSTITTQDSLHTVLAYGEWPTYLSDIDATSVDKPTHPETSADRFYTLDSVEWQVGSHGWWWKLPDALKDMGVFGQNMYYHSMGRSGFIIHTQCNATKFHSGALIVAVIPEHQLAYVGGVKVNVGYDHTHPGQSGHQIRGPSQSNDRSGGKPDEDPLFNCNGTLLGNITIFPHQIINLRTNNSSTIVVPYINCVPMDNMLKHNNLSLVIIPLVPLRPGSSGINSVPITVTIAPYKSEFSGAMEAQRQGLPTRLPSGSQQFMTTEDEQSPNILPGFHPSKKIHIPGMITNVMHMARVDSFIPINNIQGEVGKVSMYYITVTKKTVTERILVLPLEMSNTLFATTLLGEVLNYYANWSGSITITFMCVCDAFSTGKFLVAYTPPGGKLPEDRKQAMLGVHIIWDLGLQSSCTIVVPWISSGFYRRTKADSFTHGGYVSLWYQTAFVPPVSGGTGSILATCSACPDMSVRMLRDSPMMEQKNELQNNDDPVENFVESTLKEVLVVPDTKPSGPQHTTKPSILGAMEIGASSNATPESTIETRYVYNTNTNAEADVEMFLGRSALWGKVTLTRQYAKWEINFQEQAHIRKKFEFFTYLRFDMEVTIVTNNTGLMQIMFVPPGIDHPETHDDRKWDSASNPSVFFQPKSGFPRFTIPFTGLASAYYMFYDGYDKPKGSDNNEYGIAPTNDMGLLCFRTLDNSGGNDVKIYVKPKHITAWVPRPPRATQYTHKYSTNYHYKPNSSGPDEHVLKDRHFIKTRPLISSAGPSDMFVHTRDAIYKCAHLTNPTDETILLALTADLQVDSTNVPGPDVIPCCDCTAGCYYSRSKDRYFPVECVSHDWYEIQESGYYPKHIQYNLLIGEGHCEPGDCGGKLLCKHGVIGMITAGGDNHVAFTDLRPYSSLSEHQGVISDYFTQLGNAFGEGFTTNIQDHFSQITKSISDKFTSKAIKWLVRIISALTIMIRNNSDLPTILATLSLLGCSSSPWSFLKDKICSWLQIQRPASKQSDSWLRKFTECCNAAKGLEWISIKIGKFIDWLKGKLVPAVQRKRDTLDRCKKISLLEEQVNGFSSASSEAQQQLIVEVDTLKKGLDELAPLYASENKRVTKIQKDLKQLSAYLKNHRHEPVCLLLHGNPGCGKSLVTTIIARGLTQEAQVYSLPPDPKYFDGYDQQQVVILDDLGQNPDGKDLSTFCQMVSTTDFIVPMASLEDKGKSFTSQYVLASTNLDTLSPPTVTIPEAIKRRFFLDADLITTSKFRNTTGLLDVAKALQPCTGCPKPAHYKTCCPLLCGKAVVVQDRKTKANFSVNTIVEQLRHENATRKKVKHNLDAIFQGLGDSETPGFIVDLLSSSKDPKVIEYCAEQGWIGKANSTIERDFNYVHYMLNCLGSLIIILGTVYALYKLMCMTQGPYTGLPNPQTKRPELRKATLQGPEHEFVRALIKRNCHVITTSKGEFNMLGIHDNCAVVPTHAECGDSVTIDGREVRVLKQCILTDTNDTDTEITLLWLDQNEKFRDIRRFIPEHQREWSNMHLATNVTKFPMLDVEVGTVIPYGEVNLSGNPTCRLLKYNYPTKPGQCGGVIANTGNIVAIHVGGNGRVGYGAALLRKYFAQSQGEITAKHDVREKGLPQINTPNKTKLQPSVFYDVFPGVKEPAALSNGDPRLEVDLSTSVLSKYKGNTQVEWNDNIQIAVDHYSAQLYMLDINPQPLTMEQAVYGIEHLEPLDLTTSAGFPYVTMGIKKKDIVNKVTKDVTKLQEMIDKYGIDLPYVTYLKDELRAPEKIKKGKTRAIEAASINDTTHFRMVFGNLFSVFHANPGVLTGSAVGCNPDVFWSQMYACMDGELLAFDYTNYDGSLHPIWFKALGKVLDNLGFPGHLVNRLCNTTHIFKNLIYTVEGGMPSGICGTSIFNTMINNIIIRVLVLETYKNIDLDKLKIIAYGDDVVVSYPFELDPMEIANKAVRYGLTITPPDKGSTFHKIDWTNVTFLKRHFKPDTKYKFLIHPVYKMEDIYESIRWTKDPKNTQDHVHSLCLLAWHNGEEVYEKFREKIRSTSVGKVLYTPPYSLLYRQWIDQFI.

The N-myristoyl glycine; by host moiety is linked to residue Gly2. The interval 213–240 (HTHPGQSGHQIRGPSQSNDRSGGKPDED) is disordered. The span at 216-232 (PGQSGHQIRGPSQSNDR) shows a compositional bias: polar residues. The segment at 565–584 (ELQNNDDPVENFVESTLKEV) is amphipathic alpha-helix. Catalysis depends on for protease 2A activity residues His864 and Asp880. 2 residues coordinate Zn(2+): Cys897 and Cys899. Cys951 acts as the For protease 2A activity in catalysis. Zn(2+) contacts are provided by Cys957 and His959. The segment at 1088–1158 (SDSWLRKFTE…GFSSASSEAQ (71 aa)) is membrane-binding. The interval 1088-1224 (SDSWLRKFTE…NPGCGKSLVT (137 aa)) is oligomerization. The segment at 1109-1113 (SIKIG) is RNA-binding. Residues 1187 to 1346 (TKIQKDLKQL…FRNTTGLLDV (160 aa)) enclose the SF3 helicase domain. Residue 1214–1221 (GNPGCGKS) participates in ATP binding. Zn(2+) contacts are provided by Cys1353, Cys1365, and Cys1370. The segment at 1353 to 1370 (CTGCPKPAHYKTCCPLLC) adopts a C4-type; degenerate zinc-finger fold. The tract at residues 1397–1404 (ENATRKKV) is RNA-binding. Residues 1408–1413 (LDAIFQ) are oligomerization. An intramembrane segment occupies 1460-1480 (VHYMLNCLGSLIIILGTVYAL). Residue Tyr1491 is modified to O-(5'-phospho-RNA)-tyrosine. A Peptidase C3 domain is found at 1511-1689 (GPEHEFVRAL…YGAALLRKYF (179 aa)). Active-site for protease 3C activity residues include His1550, Glu1581, and Cys1657. The RdRp catalytic domain occupies 1920-2033 (GELLAFDYTN…SYPFELDPME (114 aa)). Residues Asp1926 and Asp2019 each coordinate Mg(2+).

This sequence belongs to the picornaviruses polyprotein family. In terms of assembly, interacts with capsid protein VP1 and capsid protein VP3 to form heterotrimeric protomers. As to quaternary structure, interacts with capsid protein VP0, and capsid protein VP3 to form heterotrimeric protomers. Five protomers subsequently associate to form pentamers which serve as building blocks for the capsid. Interacts with capsid protein VP2, capsid protein VP3 and capsid protein VP4 following cleavage of capsid protein VP0. Interacts (via C-terminus) with capsid protein VP4 (via C-terminus). Interacts with host CDHR3 (via N-terminus); this interaction occurs near each threefold vertex of the capsid and allows the virus attachment and entry into the host cell. Interacts with capsid protein VP1 and capsid protein VP3 in the mature capsid. Interacts with host CDHR3 (via N-terminus); this interaction occurs near each threefold vertex of the capsid and allows the virus attachment and entry into the host cell. In terms of assembly, interacts with capsid protein VP0 and capsid protein VP1 to form heterotrimeric protomers. Five protomers subsequently associate to form pentamers which serve as building blocks for the capsid. Interacts with capsid protein VP4 in the mature capsid. Interacts with protein 2C; this interaction may be important for virion morphogenesis. Interacts with host CDHR3 (via N-terminus); this interaction occurs near each threefold vertex of the capsid and allows the virus attachment and entry into the host cell. As to quaternary structure, interacts (via C-terminus) with capsid protein VP1 (via C-terminus). Interacts with capsid protein VP3. Homodimer. In terms of assembly, homohexamer; forms a hexameric ring structure with 6-fold symmetry characteristic of AAA+ ATPases. Interacts (via N-terminus) with host RTN3 (via reticulon domain); this interaction is important for viral replication. Interacts with capsid protein VP3; this interaction may be important for virion morphogenesis. As to quaternary structure, interacts with protein 3CD. Homodimer. Interacts with host GBF1. Interacts (via GOLD domain) with host ACBD3 (via GOLD domain); this interaction allows the formation of a viral protein 3A/ACBD3 heterotetramer with a 2:2 stoichiometry, which will stimulate the recruitment of host PI4KB in order to synthesize PI4P at the viral RNA replication sites. In terms of assembly, interacts with RNA-directed RNA polymerase. As to quaternary structure, interacts with protein 3AB and with RNA-directed RNA polymerase. Interacts with Viral protein genome-linked and with protein 3CD. It depends on Mg(2+) as a cofactor. Specific enzymatic cleavages in vivo by the viral proteases yield processing intermediates and the mature proteins. Post-translationally, myristoylation is required for the formation of pentamers during virus assembly. Further assembly of 12 pentamers and a molecule of genomic RNA generates the provirion. In terms of processing, during virion maturation, immature virions are rendered infectious following cleavage of VP0 into VP4 and VP2. This maturation seems to be an autocatalytic event triggered by the presence of RNA in the capsid and it is followed by a conformational change infectious virion. Myristoylation is required during RNA encapsidation and formation of the mature virus particle. Post-translationally, VPg is uridylylated by the polymerase into VPg-pUpU. This acts as a nucleotide-peptide primer for the genomic RNA replication.

It is found in the virion. Its subcellular location is the host cytoplasm. The protein resides in the host cytoplasmic vesicle membrane. It localises to the host nucleus. The enzyme catalyses a ribonucleoside 5'-triphosphate + H2O = a ribonucleoside 5'-diphosphate + phosphate + H(+). It carries out the reaction Selective cleavage of Gln-|-Gly bond in the poliovirus polyprotein. In other picornavirus reactions Glu may be substituted for Gln, and Ser or Thr for Gly.. It catalyses the reaction Selective cleavage of Tyr-|-Gly bond in the picornavirus polyprotein.. The catalysed reaction is RNA(n) + a ribonucleoside 5'-triphosphate = RNA(n+1) + diphosphate. Its activity is regulated as follows. Replication or transcription is subject to high level of random mutations by the nucleotide analog ribavirin. In terms of biological role, forms an icosahedral capsid of pseudo T=3 symmetry with capsid proteins VP2 and VP3. The capsid is 300 Angstroms in diameter, composed of 60 copies of each capsid protein and enclosing the viral positive strand RNA genome. Capsid protein VP1 mainly forms the vertices of the capsid. The VP1 C-termini form 60 dominant spike-like protrusions on the surface of the virion. Capsid protein VP1 interacts with host cell receptor CDHR3 to provide virion attachment to target host cells. This attachment induces virion internalization. Tyrosine kinases are probably involved in the entry process. After binding to its receptor, the capsid undergoes conformational changes. Capsid protein VP1 N-terminus (that contains an amphipathic alpha-helix) and capsid protein VP4 are externalized. Together, they shape a pore in the host membrane through which viral genome is translocated to host cell cytoplasm. Forms an icosahedral capsid of pseudo T=3 symmetry with capsid proteins VP2 and VP3. The capsid is 300 Angstroms in diameter, composed of 60 copies of each capsid protein and enclosing the viral positive strand RNA genome. Functionally, lies on the inner surface of the capsid shell. After binding to the host receptor, the capsid undergoes conformational changes. Capsid protein VP4 is released, Capsid protein VP1 N-terminus is externalized, and together, they shape a pore in the host membrane through which the viral genome is translocated into the host cell cytoplasm. Its function is as follows. Component of immature procapsids, which is cleaved into capsid proteins VP4 and VP2 after maturation. Allows the capsid to remain inactive before the maturation step. In terms of biological role, cysteine protease that cleaves viral polyprotein and specific host proteins. It is responsible for the autocatalytic cleavage between the P1 and P2 regions, which is the first cleavage occurring in the polyprotein. Also cleaves the host translation initiation factor EIF4G1, in order to shut down the capped cellular mRNA translation. Inhibits the host nucleus-cytoplasm protein and RNA trafficking by cleaving host members of the nuclear pores. Counteracts stress granule formation probably by antagonizing its assembly or promoting its dissassembly. Plays an essential role in the virus replication cycle by acting as a viroporin. Creates a pore in the host endoplasmic reticulum and as a consequence releases Ca2+ in the cytoplasm of infected cell. In turn, high levels of cytoplasmic calcium may trigger membrane trafficking and transport of viral ER-associated proteins to viroplasms, sites of viral genome replication. Functionally, induces and associates with structural rearrangements of intracellular membranes. Displays RNA-binding, nucleotide binding and NTPase activities. May play a role in virion morphogenesis and viral RNA encapsidation by interacting with the capsid protein VP3. Its function is as follows. Localizes the viral replication complex to the surface of membranous vesicles. Together with protein 3CD binds the Cis-Active RNA Element (CRE) which is involved in RNA synthesis initiation. Acts as a cofactor to stimulate the activity of 3D polymerase, maybe through a nucleid acid chaperone activity. In terms of biological role, localizes the viral replication complex to the surface of membranous vesicles. It inhibits host cell endoplasmic reticulum-to-Golgi apparatus transport and causes the disassembly of the Golgi complex, possibly through GBF1 interaction. This would result in depletion of MHC, trail receptors and IFN receptors at the host cell surface. Plays an essential role in viral RNA replication by recruiting ACBD3 and PI4KB at the viral replication sites, thereby allowing the formation of the rearranged membranous structures where viral replication takes place. Acts as a primer for viral RNA replication and remains covalently bound to viral genomic RNA. VPg is uridylylated prior to priming replication into VPg-pUpU. The oriI viral genomic sequence may act as a template for this. The VPg-pUpU is then used as primer on the genomic RNA poly(A) by the RNA-dependent RNA polymerase to replicate the viral genome. During genome replication, the VPg-RNA linkage is removed by the host TDP2, thereby accelerating replication. During the late stage of the replication cycle, host TDP2 is excluded from sites of viral RNA synthesis and encapsidation, allowing for the generation of progeny virions. Functionally, involved in the viral replication complex and viral polypeptide maturation. It exhibits protease activity with a specificity and catalytic efficiency that is different from protease 3C. Protein 3CD lacks polymerase activity. Protein 3CD binds to the 5'UTR of the viral genome. Its function is as follows. Major viral protease that mediates proteolytic processing of the polyprotein. Cleaves host EIF5B, contributing to host translation shutoff. Also cleaves host PABPC1, contributing to host translation shutoff. In terms of biological role, replicates the viral genomic RNA on the surface of intracellular membranes. May form linear arrays of subunits that propagate along a strong head-to-tail interaction called interface-I. Covalently attaches UMP to a tyrosine of VPg, which is used to prime RNA synthesis. The positive stranded RNA genome is first replicated at virus induced membranous vesicles, creating a dsRNA genomic replication form. This dsRNA is then used as template to synthesize positive stranded RNA genomes. ss(+)RNA genomes are either translated, replicated or encapsidated. The chain is Genome polyprotein from Homo sapiens (Human).